We begin with the raw amino-acid sequence, 157 residues long: 2-C-methyl-D-erythritol 2,4-cyclodiphosphate synthase (157 aa).

The a divalent metal cation site is built by aspartate 8 and histidine 10. 4-CDP-2-C-methyl-D-erythritol 2-phosphate is bound by residues 8–10 and 34–35; these read DVH and HS. Histidine 42 contacts a divalent metal cation. 4-CDP-2-C-methyl-D-erythritol 2-phosphate contacts are provided by residues 56–58, 61–65, 132–135, phenylalanine 139, and arginine 142; these read DIG, FPDTD, and TTTE.

This sequence belongs to the IspF family. As to quaternary structure, homotrimer. A divalent metal cation serves as cofactor.

The catalysed reaction is 4-CDP-2-C-methyl-D-erythritol 2-phosphate = 2-C-methyl-D-erythritol 2,4-cyclic diphosphate + CMP. The protein operates within isoprenoid biosynthesis; isopentenyl diphosphate biosynthesis via DXP pathway; isopentenyl diphosphate from 1-deoxy-D-xylulose 5-phosphate: step 4/6. Involved in the biosynthesis of isopentenyl diphosphate (IPP) and dimethylallyl diphosphate (DMAPP), two major building blocks of isoprenoid compounds. Catalyzes the conversion of 4-diphosphocytidyl-2-C-methyl-D-erythritol 2-phosphate (CDP-ME2P) to 2-C-methyl-D-erythritol 2,4-cyclodiphosphate (ME-CPP) with a corresponding release of cytidine 5-monophosphate (CMP). This chain is 2-C-methyl-D-erythritol 2,4-cyclodiphosphate synthase, found in Pseudomonas putida (strain W619).